The sequence spans 485 residues: Adenylate kinase 8 (485 aa).

Adenylate kinase stretches follow at residues 58–258 (PRVF…TFVL) and 269–471 (PRIL…SYIV). 67 to 72 (ASGKHT) contributes to the ATP binding site. Residues 87–113 (TPENVLSSDVSLLVKEAQSYRDKGQEV) are NMP 1. AMP is bound by residues 140-143 (GFPK) and Gln147. An LID 1 region spans residues 177 to 206 (GKRIDITDGEVYHTTFDWPSDPAVQRNLVE). Arg218 contacts AMP. An ATP-binding site is contributed by 278–283 (GSGRSL). An NMP 2 region spans residues 298–327 (CCGQVLKEAVADQTKLGELIQPYIENDQQV). AMP is bound by residues 325–327 (QQV), 354–357 (GFPQ), and Gln361. Residues 391–424 (LCMTDPVSGERYHSIYKPAPRSEVQERLQQNPKY) form an LID 2 region. Arg432 is a binding site for AMP.

This sequence belongs to the adenylate kinase family.

Its subcellular location is the cytoplasm. It is found in the cytosol. The catalysed reaction is AMP + ATP = 2 ADP. The enzyme catalyses a 2'-deoxyribonucleoside 5'-diphosphate + ATP = a 2'-deoxyribonucleoside 5'-triphosphate + ADP. It carries out the reaction a ribonucleoside 5'-diphosphate + ATP = a ribonucleoside 5'-triphosphate + ADP. Its function is as follows. Nucleoside monophosphate (NMP) kinase that catalyzes the reversible transfer of the terminal phosphate group between nucleoside triphosphates and monophosphates. Has highest activity toward AMP, and weaker activity toward dAMP, CMP and dCMP. Also displays broad nucleoside diphosphate kinase activity. This is Adenylate kinase 8 (ak8) from Xenopus laevis (African clawed frog).